Consider the following 412-residue polypeptide: Burnettramic acids biosynthesis cluster protein E (412 aa).

Disordered regions lie at residues 1–66 (MAIA…KKIR), 308–342 (RNPT…SLAT), and 386–412 (SRAE…AAKG). Positions 36–58 (EDEQWALDELQDELCQEEPSDSE) are enriched in acidic residues. The segment covering 395-404 (EATTEPSVQS) has biased composition (polar residues).

The protein operates within mycotoxin biosynthesis. In terms of biological role, part of the gene cluster that mediates the biosynthesis of burnettramic acids, an unusual class of bolaamphiphilic pyrrolizidinediones that display potent antibacterial, antifungal, and cytotoxic activities. The first step of the biosynthesis of burnettramic acids is the hydroxylation of proline by the proline hydroxylase buaE to generate 4-hydroxyproline. The PKS-NRPS buaA and trans-enoyl reductase buaC construct the highly reduced polyketide chain, and the condensation (C) domain of buaA then catalyzes the amide bond formation with the activated 4-hydroxyproline. This is followed by the R domain releasing the nascent polyketide-peptide directly via a Dieckmann condensation to afford a tetramic acid fused to the hydroxyproline, generating the bicyclic pyrrolidinedione moiety. The cytochrome P450 monooxygenases buaD and buaG are likely responsible for the multiple hydroxylations on the polyketide chain and its terminus, although in the heterologous context, buaD does not appear to be required. Therefore, while buaG may be a multifunctional cytochrome P450 monooxygenase, it cannot be ruled out that the two secondary alcohols on the polyketide chain could have an acetate origin. Finally, the glycosyltransferase buaB transfers beta-D-mannose to the aglycone burnettramic acid A to form burnettramic acid A. Burnettramic acid B is a minor cis-pyrrolizidine epimer of burnettramic acid A and it is likely that small amounts of it form naturally in acidic environments. The role of the uncharacterized protein buaF in the biosynthesis of burnettramic acids has still to be determined. The sequence is that of Burnettramic acids biosynthesis cluster protein E from Petromyces alliaceus (Aspergillus alliaceus).